The chain runs to 396 residues: S-adenosylmethionine synthase 2 (396 aa).

Glu13 contacts Mg(2+). His19 is a binding site for ATP. K(+) is bound at residue Glu47. L-methionine-binding residues include Glu60 and Gln103. ATP-binding positions include 171 to 173 (DGK), 239 to 242 (SGRF), Asp250, 256 to 257 (RK), Ala273, Lys277, and Lys281. Residue Asp250 participates in L-methionine binding. Lys281 lines the L-methionine pocket.

The protein belongs to the AdoMet synthase family. Homotetramer. Mn(2+) is required as a cofactor. Mg(2+) serves as cofactor. The cofactor is Co(2+). It depends on K(+) as a cofactor. As to expression, expressed in roots, stems and leaves (at protein level).

Its subcellular location is the cytoplasm. It carries out the reaction L-methionine + ATP + H2O = S-adenosyl-L-methionine + phosphate + diphosphate. The protein operates within amino-acid biosynthesis; S-adenosyl-L-methionine biosynthesis; S-adenosyl-L-methionine from L-methionine: step 1/1. In terms of biological role, catalyzes the formation of S-adenosylmethionine from methionine and ATP. The reaction comprises two steps that are both catalyzed by the same enzyme: formation of S-adenosylmethionine (AdoMet) and triphosphate, and subsequent hydrolysis of the triphosphate. May be involved in the synthesis of betain in response to abiotic stress such as high salinity. The sequence is that of S-adenosylmethionine synthase 2 (SAMS2) from Atriplex nummularia (Old man saltbush).